Consider the following 1413-residue polypeptide: DNA-directed RNA polymerase subunit beta' (1413 aa).

Zn(2+)-binding residues include cysteine 70, cysteine 72, cysteine 85, and cysteine 88. Positions 460, 462, and 464 each coordinate Mg(2+). 4 residues coordinate Zn(2+): cysteine 819, cysteine 893, cysteine 900, and cysteine 903. The interval 1393-1413 (EAFEFGTPETPAAEQTPHTNE) is disordered.

This sequence belongs to the RNA polymerase beta' chain family. In terms of assembly, the RNAP catalytic core consists of 2 alpha, 1 beta, 1 beta' and 1 omega subunit. When a sigma factor is associated with the core the holoenzyme is formed, which can initiate transcription. Mg(2+) serves as cofactor. The cofactor is Zn(2+).

It catalyses the reaction RNA(n) + a ribonucleoside 5'-triphosphate = RNA(n+1) + diphosphate. Functionally, DNA-dependent RNA polymerase catalyzes the transcription of DNA into RNA using the four ribonucleoside triphosphates as substrates. The sequence is that of DNA-directed RNA polymerase subunit beta' from Paraburkholderia phymatum (strain DSM 17167 / CIP 108236 / LMG 21445 / STM815) (Burkholderia phymatum).